The sequence spans 444 residues: tRNA-2-methylthio-N(6)-dimethylallyladenosine synthase (444 aa).

The MTTase N-terminal domain occupies 2-119 (KKLYIRTFGC…LPSMLNEVLT (118 aa)). [4Fe-4S] cluster contacts are provided by C11, C48, C82, C161, C165, and C168. The 233-residue stretch at 147–379 (KTSSVTAFVS…QKTIDKNTER (233 aa)) folds into the Radical SAM core domain. One can recognise a TRAM domain in the interval 382–444 (KSMVGSVQKI…GNSLVGNLIA (63 aa)).

It belongs to the methylthiotransferase family. MiaB subfamily. Monomer. Requires [4Fe-4S] cluster as cofactor.

It localises to the cytoplasm. The enzyme catalyses N(6)-dimethylallyladenosine(37) in tRNA + (sulfur carrier)-SH + AH2 + 2 S-adenosyl-L-methionine = 2-methylsulfanyl-N(6)-dimethylallyladenosine(37) in tRNA + (sulfur carrier)-H + 5'-deoxyadenosine + L-methionine + A + S-adenosyl-L-homocysteine + 2 H(+). Catalyzes the methylthiolation of N6-(dimethylallyl)adenosine (i(6)A), leading to the formation of 2-methylthio-N6-(dimethylallyl)adenosine (ms(2)i(6)A) at position 37 in tRNAs that read codons beginning with uridine. The chain is tRNA-2-methylthio-N(6)-dimethylallyladenosine synthase from Ruthia magnifica subsp. Calyptogena magnifica.